A 280-amino-acid polypeptide reads, in one-letter code: 3-methyl-2-oxobutanoate hydroxymethyltransferase (280 aa).

2 residues coordinate Mg(2+): Asp60 and Asp99. 3-methyl-2-oxobutanoate is bound by residues 60–61 (DS), Asp99, and Lys129. Glu131 is a Mg(2+) binding site. The active-site Proton acceptor is the Glu198.

It belongs to the PanB family. Homodecamer; pentamer of dimers. It depends on Mg(2+) as a cofactor.

It is found in the cytoplasm. The catalysed reaction is 3-methyl-2-oxobutanoate + (6R)-5,10-methylene-5,6,7,8-tetrahydrofolate + H2O = 2-dehydropantoate + (6S)-5,6,7,8-tetrahydrofolate. It participates in cofactor biosynthesis; (R)-pantothenate biosynthesis; (R)-pantoate from 3-methyl-2-oxobutanoate: step 1/2. Its function is as follows. Catalyzes the reversible reaction in which hydroxymethyl group from 5,10-methylenetetrahydrofolate is transferred onto alpha-ketoisovalerate to form ketopantoate. The polypeptide is 3-methyl-2-oxobutanoate hydroxymethyltransferase (Thermobifida fusca (strain YX)).